We begin with the raw amino-acid sequence, 142 residues long: Transcriptional regulator MraZ (142 aa).

SpoVT-AbrB domains are found at residues 5–47 and 76–119; these read THTP…PTPE and AHDE…DRVA.

Belongs to the MraZ family. Forms oligomers.

It is found in the cytoplasm. It localises to the nucleoid. The chain is Transcriptional regulator MraZ from Salinispora tropica (strain ATCC BAA-916 / DSM 44818 / JCM 13857 / NBRC 105044 / CNB-440).